The sequence spans 957 residues: ADAMTS-like protein 2 (957 aa).

The first 29 residues, 1–29 (MDGRRQHPHWAWSLLAVAVVAGGAAPTEA), serve as a signal peptide directing secretion. Residues 47 to 106 (AYWWGEWTKWTACSRSCGGGVTSQERHCLQQRRKSVPGTGNRTCVGTSKRYQLCRVQECP) enclose the TSP type-1 1 domain. Intrachain disulfides connect Cys-59/Cys-100, Cys-63/Cys-105, and Cys-74/Cys-90. N-linked (GlcNAc...) asparagine glycans are attached at residues Asn-87, Asn-374, Asn-435, Asn-482, Asn-518, Asn-530, Asn-539, and Asn-550. Over residues 532 to 544 (SSEAPFPNTSASP) the composition is skewed to polar residues. The tract at residues 532–568 (SSEAPFPNTSASPPNLAGNRTHKARTRPKARKQGVSP) is disordered. The segment covering 551 to 563 (RTHKARTRPKARK) has biased composition (basic residues). TSP type-1 domains follow at residues 570 to 624 (DMYR…EFCA), 628 to 692 (CQPR…PACG), 694 to 742 (QWEM…TGPP), 743 to 801 (CDRQ…KNCP), 803 to 857 (HWLA…TCFE), and 859 to 914 (PCFK…QPCP). Residue Asn-737 is glycosylated (N-linked (GlcNAc...) asparagine). Asn-813 is a glycosylation site (N-linked (GlcNAc...) asparagine). Positions 918 to 956 (PDDSCQDQPGTNCALAIKVNLCGHWYYSKACCRSCRPPH) constitute a PLAC domain.

As to quaternary structure, interacts with LTBP1. Post-translationally, glycosylated. Can be O-fucosylated by POFUT2 on a serine or a threonine residue found within the consensus sequence C1-X(2)-(S/T)-C2-G of the TSP type-1 repeat domains where C1 and C2 are the first and second cysteine residue of the repeat, respectively. Fucosylated repeats can then be further glycosylated by the addition of a beta-1,3-glucose residue by the glucosyltransferase, B3GALTL. Fucosylation mediates the efficient secretion of ADAMTS family members. Can also be C-glycosylated with one or two mannose molecules on tryptophan residues within the consensus sequence W-X-X-W of the TPRs, and N-glycosylated. These other glycosylations can also facilitate secretion.

Its subcellular location is the secreted. The chain is ADAMTS-like protein 2 (Adamtsl2) from Mus musculus (Mouse).